Reading from the N-terminus, the 550-residue chain is MPKEKYDPPDPRRIYTIMSAEEVANGKKSHWDELEISGRVRSLSTSLWTLTHLTVLHLSDNNLSRIPPDIAKLHNLVYLDLSSNKLRSLPAELGNVVSLRELLLNNNLLRVLPFELGRLFRLQTLGLKGNPLSQDILSLYQEPDGMRKLLNYMLDNLSVHPEQLPHRPWITLKERDQILPSVSFTVMCYNVLCDKYATRQLYGYCPSWALNWEYRKKGIMDEIISCDADIISLQEVETEQYFTLFMPALEERGYDGFFSPKSRAKIMSDQEKKHVDGCAIFFRTEKFSLVQKHTVEFNQIAMANSEGSEAMLNRVMTKDNIGVSVLLEVHKDFSGAGMKPHHSSEKQLLMVANAHMHWDPEYSDVKLIQTMMFVSELKSIIEKAACRPGSPTPDPNSIPFVLCADLNSLLDSGVVEYLTNGGVADNHKDFKELRYNECLTNFNCNGKNGTPDGRITHGFQLRSAYENNLMPYTNYTFDFKGVIDYIFYSKTHMDVLGILGPLDPQWMMDNNITGCPHPHIPSDHFSLLTQLELHPPLLPIINGVHLPSRR.

Positions 1 to 148 are required for interaction with cnot1, cnot3 and cnot7; that stretch reads MPKEKYDPPD…LYQEPDGMRK (148 aa). 4 LRR repeats span residues 52–73, 75–96, 98–120, and 121–143; these read HLTVLHLSDNNLSRIPPDIAKL, NLVYLDLSSNKLRSLPAELGNV, SLRELLLNNNLLRVLPFELGRLF, and RLQTLGLKGNPLSQDILSLYQEP. A nuclease domain region spans residues 153 to 550; the sequence is MLDNLSVHPE…INGVHLPSRR (398 aa). Glu235 is a binding site for Mg(2+). Substrate is bound by residues Glu235, Glu271, His355, and Pro360. Asp405 is a Mg(2+) binding site. Asp405 (proton donor/acceptor) is an active-site residue. 3 residues coordinate substrate: Asn407, Asn474, and Phe479.

This sequence belongs to the CCR4/nocturin family. As to quaternary structure, component of the CCR4-NOT complex. The cofactor is Mg(2+).

It localises to the cytoplasm. The protein resides in the nucleus. The enzyme catalyses Exonucleolytic cleavage of poly(A) to 5'-AMP.. Poly(A) nuclease with 3'-5' RNase activity. Catalytic component of the CCR4-NOT complex which is one of the major cellular mRNA deadenylases and is linked to various cellular processes including bulk mRNA degradation, miRNA-mediated repression, translational repression during translational initiation and general transcription regulation. Additional complex functions may be a consequence of its influence on mRNA expression. The sequence is that of CCR4-NOT transcription complex subunit 6-like-A (cnot6l-a) from Xenopus laevis (African clawed frog).